The following is a 440-amino-acid chain: MNDYHLEDTTSELEALRLENAQLREQLAKREDSSRDYPLSLEEYQRYGRQMIVEETGGVAGQVKLKNTRVLVVGAGGLGCPALPYLAGAGVGQIGIVDNDVVETSNLHRQVLHDSSRVGMLKCESARQYITKLNPHINVVTYPVRLNSSNAFDIFKGYNYILDCTDSPLTRYLVSDVAVNLGITVVSASGLGTEGQLTILNFNNIGPCYRCFYPTPPPPNAVTSCQEGGVIGPCIGLVGTMMAVETLKLILGIYTNENFSPFLMLYSGFPQQSLRTFKMRGRQEKCLCCGKNRTITKEAIEKGEINYELFCGARNYNVCEPDERISVDAFQRIYKDDEFLAKHIFLDVRPSHHYEISHFPEAVNIPIKNLRDMNGDLKKLQEKLPSVEKDSNIVILCRYGNDSQLATRLLKDKFGFSNVRDVRGGYFKYIDDIDQTIPKY.

M1 carries the N-acetylmethionine modification. ATP contacts are provided by residues G77, D98, 105–109 (SNLHR), K122, and 166–167 (DS). 2 residues coordinate Zn(2+): C208 and C211. C225 functions as the Glycyl thioester intermediate; for adenylyltransferase activity in the catalytic mechanism. Residues C286 and C289 each contribute to the Zn(2+) site. Phosphoserine is present on S326. Positions 339-438 (FLAKHIFLDV…YIDDIDQTIP (100 aa)) constitute a Rhodanese domain. C397 serves as the catalytic Cysteine persulfide intermediate; for sulfurtransferase activity.

This sequence in the N-terminal section; belongs to the HesA/MoeB/ThiF family. UBA4 subfamily. Requires Zn(2+) as cofactor.

Its subcellular location is the cytoplasm. The protein resides in the cytosol. It functions in the pathway tRNA modification; 5-methoxycarbonylmethyl-2-thiouridine-tRNA biosynthesis. Plays a central role in 2-thiolation of mcm(5)S(2)U at tRNA wobble positions of cytosolic tRNA(Lys), tRNA(Glu) and tRNA(Gln). Acts by mediating the C-terminal thiocarboxylation of sulfur carrier URM1. Its N-terminus first activates URM1 as acyl-adenylate (-COAMP), then the persulfide sulfur on the catalytic cysteine is transferred to URM1 to form thiocarboxylation (-COSH) of its C-terminus. The reaction probably involves hydrogen sulfide that is generated from the persulfide intermediate and that acts as a nucleophile towards URM1. Subsequently, a transient disulfide bond is formed. Does not use thiosulfate as sulfur donor; NFS1 probably acting as a sulfur donor for thiocarboxylation reactions. Prior mcm(5) tRNA modification by the elongator complex is required for 2-thiolation. May also be involved in protein urmylation. This chain is Adenylyltransferase and sulfurtransferase UBA4, found in Saccharomyces cerevisiae (strain YJM789) (Baker's yeast).